The chain runs to 339 residues: MESRKDITNQEELWKMKPRRNLEEDDYLHKDTGETSMLKRPVLLHLHQTAHADEFDCPSELQHTQELFPQWHLPIKIAAIIASLTFLYTLLREVIHPLATSHQQYFYKIPILVINKVLPMVSITLLALVYLPGVIAAIVQLHNGTKYKKFPHWLDKWMLTRKQFGLLSFFFAVLHAIYSLSYPMRRSYRYKLLNWAYQQVQQNKEDAWIEHDVWRMEIYVSLGIVGLAILALLAVTSIPSVSDSLTWREFHYIQSKLGIVSLLLGTIHALIFAWNKWIDIKQFVWYTPPTFMIAVFLPIVVLIFKSILFLPCLRKKILKIRHGWEDVTKINKTEICSQL.

Helical transmembrane passes span 71–91 and 119–139; these read WHLPIKIAAIIASLTFLYTLL and PMVSITLLALVYLPGVIAAIV. The Ferric oxidoreductase domain occupies 118 to 265; it reads LPMVSITLLA…KLGIVSLLLG (148 aa). FAD contacts are provided by Q140 and R161. 2 helical membrane passes run 164–184 and 218–238; these read FGLLSFFFAVLHAIYSLSYPM and IYVSLGIVGLAILALLAVTSI. H175 lines the heme b pocket. FAD-binding residues include S237 and Q254. 2 consecutive transmembrane segments (helical) span residues 258 to 278 and 291 to 311; these read GIVSLLLGTIHALIFAWNKWI and FMIAVFLPIVVLIFKSILFLP. H268 contacts heme b.

It belongs to the STEAP family. As to quaternary structure, homotrimer. FAD serves as cofactor. It depends on heme b as a cofactor. Ubiquitously expressed. Highly expressed in prostate tumors.

The protein localises to the endosome membrane. It localises to the cell membrane. Does not function as a metalloreductase due to the absence of binding sites for the electron-donating substrate NADPH. Promotes Fe(3+) reduction when fused to the NADPH-binding domain of STEAP4. The polypeptide is STEAP1 protein (STEAP1) (Homo sapiens (Human)).